The chain runs to 467 residues: Siroheme synthase (467 aa).

Residues 1-203 are precorrin-2 dehydrogenase /sirohydrochlorin ferrochelatase; the sequence is METLPIFMKL…GQEEAARHAM (203 aa). NAD(+)-binding positions include 22–23 and 43–44; these read EI and PE. The residue at position 128 (Ser128) is a Phosphoserine. Residues 216-467 are uroporphyrinogen-III C-methyltransferase; that stretch reads GEVYLVGGGP…APSPEVVSAG (252 aa). Pro225 contacts S-adenosyl-L-methionine. The active-site Proton acceptor is the Asp248. Lys270 functions as the Proton donor in the catalytic mechanism. S-adenosyl-L-methionine contacts are provided by residues 301 to 303, Ile306, 331 to 332, Met383, and Gly412; these read GGD and TA.

In the N-terminal section; belongs to the precorrin-2 dehydrogenase / sirohydrochlorin ferrochelatase family. This sequence in the C-terminal section; belongs to the precorrin methyltransferase family.

The catalysed reaction is uroporphyrinogen III + 2 S-adenosyl-L-methionine = precorrin-2 + 2 S-adenosyl-L-homocysteine + H(+). It catalyses the reaction precorrin-2 + NAD(+) = sirohydrochlorin + NADH + 2 H(+). The enzyme catalyses siroheme + 2 H(+) = sirohydrochlorin + Fe(2+). Its pathway is cofactor biosynthesis; adenosylcobalamin biosynthesis; precorrin-2 from uroporphyrinogen III: step 1/1. The protein operates within cofactor biosynthesis; adenosylcobalamin biosynthesis; sirohydrochlorin from precorrin-2: step 1/1. It functions in the pathway porphyrin-containing compound metabolism; siroheme biosynthesis; precorrin-2 from uroporphyrinogen III: step 1/1. It participates in porphyrin-containing compound metabolism; siroheme biosynthesis; siroheme from sirohydrochlorin: step 1/1. Its pathway is porphyrin-containing compound metabolism; siroheme biosynthesis; sirohydrochlorin from precorrin-2: step 1/1. Its function is as follows. Multifunctional enzyme that catalyzes the SAM-dependent methylations of uroporphyrinogen III at position C-2 and C-7 to form precorrin-2 via precorrin-1. Then it catalyzes the NAD-dependent ring dehydrogenation of precorrin-2 to yield sirohydrochlorin. Finally, it catalyzes the ferrochelation of sirohydrochlorin to yield siroheme. The polypeptide is Siroheme synthase (Methylobacillus flagellatus (strain ATCC 51484 / DSM 6875 / VKM B-1610 / KT)).